The chain runs to 211 residues: Sec-independent protein translocase protein TatB (211 aa).

The chain crosses the membrane as a helical span at residues 1–21 (MFDIGVGELTLIAVVALVVLG). A disordered region spans residues 175 to 211 (AHLTSAPAPPVTVAPVDAGTSASPTPSEPTKIQEKQP). Over residues 194–204 (TSASPTPSEPT) the composition is skewed to polar residues.

The protein belongs to the TatB family. In terms of assembly, the Tat system comprises two distinct complexes: a TatABC complex, containing multiple copies of TatA, TatB and TatC subunits, and a separate TatA complex, containing only TatA subunits. Substrates initially bind to the TatABC complex, which probably triggers association of the separate TatA complex to form the active translocon.

It is found in the cell inner membrane. Functionally, part of the twin-arginine translocation (Tat) system that transports large folded proteins containing a characteristic twin-arginine motif in their signal peptide across membranes. Together with TatC, TatB is part of a receptor directly interacting with Tat signal peptides. TatB may form an oligomeric binding site that transiently accommodates folded Tat precursor proteins before their translocation. The chain is Sec-independent protein translocase protein TatB from Xanthomonas oryzae pv. oryzae (strain MAFF 311018).